Reading from the N-terminus, the 255-residue chain is MSNLGQFDSDFYQSNYTIDNQEQTCNDSNACGNLYGSRKQQASEQPQPAFVPAEMLASSGYSGQFFQPASNQDYYSPSSYIDSFEEEPPLLEELGINFDHIWQKTLTVLNPMKPADGSIMNETDLTGPILFCMALGATLLLAGKVQFGYVYGMSAIGCLGIHALLNLMSSSGVSYGCVASVLGYCLLPMVILSSCAIFFSLQGTFGTVSALVIIGWCSLSASKIFTSALAMEGQQLLIAYPCALLYGLFALVTVF.

The Cytoplasmic segment spans residues 1–124 (MSNLGQFDSD…ADGSIMNETD (124 aa)). A helical membrane pass occupies residues 125–145 (LTGPILFCMALGATLLLAGKV). Gln146 is a topological domain (lumenal). The helical transmembrane segment at 147–167 (FGYVYGMSAIGCLGIHALLNL) threads the bilayer. At 168-180 (MSSSGVSYGCVAS) the chain is on the cytoplasmic side. A helical membrane pass occupies residues 181–201 (VLGYCLLPMVILSSCAIFFSL). The Lumenal segment spans residues 202–204 (QGT). Residues 205-225 (FGTVSALVIIGWCSLSASKIF) form a helical membrane-spanning segment. Over 226–234 (TSALAMEGQ) the chain is Cytoplasmic. The chain crosses the membrane as a helical span at residues 235–255 (QLLIAYPCALLYGLFALVTVF).

Belongs to the YIP1 family.

It is found in the endoplasmic reticulum membrane. Its subcellular location is the golgi apparatus. The protein resides in the cis-Golgi network membrane. The protein localises to the trans-Golgi network membrane. The sequence is that of Protein YIPF7 (YIPF7) from Bos taurus (Bovine).